The following is a 326-amino-acid chain: N-acetyl-gamma-glutamyl-phosphate reductase (326 aa).

The active site involves C155.

The protein belongs to the NAGSA dehydrogenase family. Type 1 subfamily.

The protein localises to the cytoplasm. It carries out the reaction N-acetyl-L-glutamate 5-semialdehyde + phosphate + NADP(+) = N-acetyl-L-glutamyl 5-phosphate + NADPH + H(+). It functions in the pathway amino-acid biosynthesis; L-arginine biosynthesis; N(2)-acetyl-L-ornithine from L-glutamate: step 3/4. Catalyzes the NADPH-dependent reduction of N-acetyl-5-glutamyl phosphate to yield N-acetyl-L-glutamate 5-semialdehyde. In Shewanella baltica (strain OS195), this protein is N-acetyl-gamma-glutamyl-phosphate reductase.